The following is a 122-amino-acid chain: Large ribosomal subunit protein bL12 (122 aa).

The protein belongs to the bacterial ribosomal protein bL12 family. In terms of assembly, homodimer. Part of the ribosomal stalk of the 50S ribosomal subunit. Forms a multimeric L10(L12)X complex, where L10 forms an elongated spine to which 2 to 4 L12 dimers bind in a sequential fashion. Binds GTP-bound translation factors.

Functionally, forms part of the ribosomal stalk which helps the ribosome interact with GTP-bound translation factors. Is thus essential for accurate translation. The protein is Large ribosomal subunit protein bL12 of Shewanella loihica (strain ATCC BAA-1088 / PV-4).